The chain runs to 37 residues: Beta-2-microglobulin (37 aa).

Residues 11-37 (GKEDVLICHVSNFHPPDITITLLKNGE) form the Ig-like C1-type domain.

This sequence belongs to the beta-2-microglobulin family. As to quaternary structure, heterodimer of an alpha chain and a beta chain. Beta-2-microglobulin is the beta-chain of major histocompatibility complex class I molecules.

It is found in the secreted. In terms of biological role, component of the class I major histocompatibility complex (MHC). Involved in the presentation of peptide antigens to the immune system. This is Beta-2-microglobulin (b2m) from Oreochromis niloticus (Nile tilapia).